A 445-amino-acid chain; its full sequence is Transmembrane protein 184C (445 aa).

7 consecutive transmembrane segments (helical) span residues 15-35 (LVVL…VWEL), 46-66 (AWFI…WGIL), 84-104 (ILWM…YPNI), 177-197 (YTVV…VGVY), 210-230 (YLVI…VLFY), 252-272 (VVFV…VGVI), and 285-305 (AVAT…AAIA). Disordered stretches follow at residues 369–393 (EHTS…SSPM) and 421–445 (TSAT…LDRS). Residues 370–390 (HTSLLSSSTQDPISDASSMPS) show a composition bias toward polar residues.

This sequence belongs to the TMEM184 family.

It is found in the membrane. Its function is as follows. May play a role in cell growth. In Gallus gallus (Chicken), this protein is Transmembrane protein 184C (TMEM184C).